The following is a 425-amino-acid chain: Ribulose bisphosphate carboxylase (425 aa).

Catalysis depends on lysine 153, which acts as the Proton acceptor. Residue lysine 155 participates in substrate binding. The Mg(2+) site is built by lysine 179, aspartate 181, and glutamate 182. At lysine 179 the chain carries N6-carboxylysine. Histidine 269 serves as the catalytic Proton acceptor. Substrate-binding positions include arginine 270, histidine 302, 353–355 (SGG), and 375–378 (QAGG).

The protein belongs to the RuBisCO large chain family. Type III subfamily. In terms of assembly, homodimer. In contrast to form I RuBisCO, the form III RuBisCO is composed solely of large subunits. The cofactor is Mg(2+).

The enzyme catalyses 2 (2R)-3-phosphoglycerate + 2 H(+) = D-ribulose 1,5-bisphosphate + CO2 + H2O. It catalyses the reaction D-ribulose 1,5-bisphosphate + O2 = 2-phosphoglycolate + (2R)-3-phosphoglycerate + 2 H(+). Its activity is regulated as follows. Reversibly inhibited by O(2). Its function is as follows. Catalyzes the addition of molecular CO(2) and H(2)O to ribulose 1,5-bisphosphate (RuBP), generating two molecules of 3-phosphoglycerate (3-PGA). Functions in an archaeal AMP degradation pathway, together with AMP phosphorylase and R15P isomerase. The sequence is that of Ribulose bisphosphate carboxylase from Methanocaldococcus jannaschii (strain ATCC 43067 / DSM 2661 / JAL-1 / JCM 10045 / NBRC 100440) (Methanococcus jannaschii).